A 478-amino-acid polypeptide reads, in one-letter code: UBP1-associated protein 2A (478 aa).

Residues 1–99 form a disordered region; it reads MTKKRKLEGE…NQEDDDDEPI (99 aa). Acidic residues predominate over residues 41-75; it reads GDVEEVEYEEVEEEQEEEVEDDDDEDDGDENEDQT. 2 consecutive RRM domains span residues 140–217 and 245–328; these read RKIF…LASK and KKIY…KPGK. Disordered regions lie at residues 321 to 359 and 442 to 478; these read IDGP…GGHG and GTQP…YMGH. Positions 442–456 are enriched in low complexity; it reads GTQPGLQGGYQTPQP. Residues 457 to 470 are compositionally biased toward gly residues; the sequence is GQGGTSRGQHGVGP.

Interacts with UBA1A, UBA2A, UBP1A, UBP1B, UBP1C and SRK2E. As to expression, expressed in young leaves, flowers and embryos.

It is found in the nucleus. Heterogeneous nuclear ribonucleoprotein (hnRNP)-like protein that acts as a component of a complex regulating the turnover of mRNAs in the nucleus. Binds with high affinity to RNA molecules that contain U-rich sequences in 3'-UTRs. May function in complex with UBP1 and contribute to the stabilization of mRNAs in the nucleus. However, unlike UBP1, UBA2A does not stimulate pre-mRNA splicing. The protein is UBP1-associated protein 2A (UBA2A) of Arabidopsis thaliana (Mouse-ear cress).